The following is a 301-amino-acid chain: Acetylglutamate kinase (301 aa).

Substrate is bound by residues 68–69, Arg-90, and Asn-195; that span reads GG.

The protein belongs to the acetylglutamate kinase family. ArgB subfamily.

The protein resides in the cytoplasm. It carries out the reaction N-acetyl-L-glutamate + ATP = N-acetyl-L-glutamyl 5-phosphate + ADP. Its pathway is amino-acid biosynthesis; L-arginine biosynthesis; N(2)-acetyl-L-ornithine from L-glutamate: step 2/4. In terms of biological role, catalyzes the ATP-dependent phosphorylation of N-acetyl-L-glutamate. This is Acetylglutamate kinase from Pseudomonas paraeruginosa (strain DSM 24068 / PA7) (Pseudomonas aeruginosa (strain PA7)).